We begin with the raw amino-acid sequence, 460 residues long: Kynureninase (460 aa).

Residues leucine 116, threonine 117, phenylalanine 144–aspartate 147, serine 199, aspartate 228, histidine 231, and tyrosine 253 contribute to the pyridoxal 5'-phosphate site. The residue at position 254 (lysine 254) is an N6-(pyridoxal phosphate)lysine. Positions 288 and 316 each coordinate pyridoxal 5'-phosphate.

The protein belongs to the kynureninase family. Homodimer. The cofactor is pyridoxal 5'-phosphate.

Its subcellular location is the cytoplasm. It catalyses the reaction L-kynurenine + H2O = anthranilate + L-alanine + H(+). It carries out the reaction 3-hydroxy-L-kynurenine + H2O = 3-hydroxyanthranilate + L-alanine + H(+). It participates in amino-acid degradation; L-kynurenine degradation; L-alanine and anthranilate from L-kynurenine: step 1/1. It functions in the pathway cofactor biosynthesis; NAD(+) biosynthesis; quinolinate from L-kynurenine: step 2/3. Its function is as follows. Catalyzes the cleavage of L-kynurenine (L-Kyn) and L-3-hydroxykynurenine (L-3OHKyn) into anthranilic acid (AA) and 3-hydroxyanthranilic acid (3-OHAA), respectively. This Debaryomyces hansenii (strain ATCC 36239 / CBS 767 / BCRC 21394 / JCM 1990 / NBRC 0083 / IGC 2968) (Yeast) protein is Kynureninase.